We begin with the raw amino-acid sequence, 319 residues long: D-alanine--D-alanine ligase B (319 aa).

The 196-residue stretch at 117-312 (KRVWLSLGLP…FQQLVLAILA (196 aa)) folds into the ATP-grasp domain. Residue 143–198 (AQRLGFPLIVKPAHEGSSIGMAKVGGLDELIAAWREAARYDSQVLVEQWISGPEFT) coordinates ATP. The Mg(2+) site is built by aspartate 266, glutamate 279, and asparagine 281.

Belongs to the D-alanine--D-alanine ligase family. Requires Mg(2+) as cofactor. Mn(2+) is required as a cofactor.

Its subcellular location is the cytoplasm. The enzyme catalyses 2 D-alanine + ATP = D-alanyl-D-alanine + ADP + phosphate + H(+). It functions in the pathway cell wall biogenesis; peptidoglycan biosynthesis. Its function is as follows. Cell wall formation. The chain is D-alanine--D-alanine ligase B from Pseudomonas aeruginosa (strain ATCC 15692 / DSM 22644 / CIP 104116 / JCM 14847 / LMG 12228 / 1C / PRS 101 / PAO1).